Reading from the N-terminus, the 302-residue chain is 2-phosphoglycerate kinase (302 aa).

Positions 2–89 (IKVIERDGKV…FWRRFRKLKI (88 aa)) constitute an ATP-cone domain.

Belongs to the 2-phosphoglycerate kinase family. Requires a divalent metal cation as cofactor.

The enzyme catalyses (2R)-2-phosphoglycerate + ATP = (2R)-2,3-bisphosphoglycerate + ADP + H(+). The protein operates within thermoadapter biosynthesis; cyclic 2,3-diphosphoglycerate biosynthesis; cyclic 2,3-diphosphoglycerate from 2-phospho-D-glycerate: step 1/2. In terms of biological role, catalyzes the phosphorylation of 2-phosphoglycerate to 2,3-diphosphoglycerate. Involved in the biosynthesis of cyclic 2,3-bisphosphoglycerate, a thermoprotectant. The sequence is that of 2-phosphoglycerate kinase from Pyrococcus furiosus (strain ATCC 43587 / DSM 3638 / JCM 8422 / Vc1).